A 228-amino-acid polypeptide reads, in one-letter code: MLNKLSAEFFGTFWLVFGGCGSAILAAAFPELGIGFLGVALAFGLTVLTMAYAVGGISGGHFNPAVSLSLTVAGRLPAKDLIPYWVAQVLGAIATAAILYVIASGKDGFSAGGLASNGYGELSPGGYSMMAGLLIEIILTAFFIIIILGSTSSLAPAGFAPIAIGFGLTLIHLVSIPVTNTSVNPARSTGVALFADTAALSQLWLFWVAPLVGAVIGAIIWKGLLGRD.

The next 5 helical transmembrane spans lie at 1-21, 46-66, 82-102, 129-149, and 154-174; these read MLNK…GGCG, TVLT…NPAV, IPYW…LYVI, MMAG…IILG, and LAPA…IHLV. An NPA 1 motif is present at residues 63 to 65; it reads NPA. The NPA 2 signature appears at 184–186; that stretch reads NPA. The helical transmembrane segment at 205–225 threads the bilayer; sequence LFWVAPLVGAVIGAIIWKGLL.

The protein belongs to the MIP/aquaporin (TC 1.A.8) family. Homotetramer.

Its subcellular location is the cell inner membrane. It catalyses the reaction H2O(in) = H2O(out). Channel that permits osmotically driven movement of water in both directions. It is involved in the osmoregulation and in the maintenance of cell turgor during volume expansion in rapidly growing cells. It mediates rapid entry or exit of water in response to abrupt changes in osmolarity. This Brucella suis biovar 1 (strain 1330) protein is Aquaporin Z.